The following is a 332-amino-acid chain: MLEGVEHLLLLLLLTDVNSKELQSGNQTSVSHFILVGLHHPPQLGAPLFLAFLVIYLLTVSGNGLIILTVLVDIRLHRPMCLFLCHLSFLDMTISCAIVPKMLAGFLLGSRIISFGGCVIQLFSFHFLGCTECFLYTLMAYDRFLAICKPLHYATIMTHRVCNSLALGTWLGGTIHSLFQTSFVFRLPFCGPNRVDYIFCDIPAMLRLACADTAINELVTFADIGFLALTCFMLILTSYGYIVAAILRIPSADGRRNAFSTCAAHLTVVIVYYVPCTFIYLRPCSQEPLDGVVAVFYTVITPLLNSIIYTLCNKEMKAALQRLGGHKEVQPH.

The Extracellular portion of the chain corresponds to 1–46 (MLEGVEHLLLLLLLTDVNSKELQSGNQTSVSHFILVGLHHPPQLGA). Residue asparagine 26 is glycosylated (N-linked (GlcNAc...) asparagine). A helical transmembrane segment spans residues 47 to 67 (PLFLAFLVIYLLTVSGNGLII). The Cytoplasmic segment spans residues 68-75 (LTVLVDIR). The chain crosses the membrane as a helical span at residues 76–96 (LHRPMCLFLCHLSFLDMTISC). The Extracellular portion of the chain corresponds to 97 to 120 (AIVPKMLAGFLLGSRIISFGGCVI). An intrachain disulfide couples cysteine 118 to cysteine 210. The helical transmembrane segment at 121 to 141 (QLFSFHFLGCTECFLYTLMAY) threads the bilayer. The Cytoplasmic portion of the chain corresponds to 142 to 160 (DRFLAICKPLHYATIMTHR). A helical membrane pass occupies residues 161 to 181 (VCNSLALGTWLGGTIHSLFQT). At 182 to 218 (SFVFRLPFCGPNRVDYIFCDIPAMLRLACADTAINEL) the chain is on the extracellular side. Residues 219–238 (VTFADIGFLALTCFMLILTS) traverse the membrane as a helical segment. Topologically, residues 239–258 (YGYIVAAILRIPSADGRRNA) are cytoplasmic. The helical transmembrane segment at 259 to 279 (FSTCAAHLTVVIVYYVPCTFI) threads the bilayer. Over 280–290 (YLRPCSQEPLD) the chain is Extracellular. Residues 291–311 (GVVAVFYTVITPLLNSIIYTL) traverse the membrane as a helical segment. Residues 312-332 (CNKEMKAALQRLGGHKEVQPH) lie on the Cytoplasmic side of the membrane.

This sequence belongs to the G-protein coupled receptor 1 family.

Its subcellular location is the cell membrane. Its function is as follows. Odorant receptor. The sequence is that of Olfactory receptor 10G6 (OR10G6) from Homo sapiens (Human).